The chain runs to 270 residues: uncharacterized protein (270 aa).

An N-terminal signal peptide occupies residues 1-22 (MEYIKKIALYMSVLLLIIFIGG). Cys-23 carries N-palmitoyl cysteine lipidation. Residue Cys-23 is the site of S-diacylglycerol cysteine attachment.

Belongs to the staphylococcal tandem lipoprotein family.

It is found in the cell membrane. This is an uncharacterized protein from Staphylococcus aureus (strain N315).